The chain runs to 772 residues: LGALVVALCALSPPARAATASRGAPQARAPQGRVSPMRPSTMVVEHPEFLKAGKEPGLQIWRVEKFDLVPVPPNLYGDFFTGDAYVILKTVQLRNGNLQYDLHYWLGNECSQDESGAAAIFTVQLDDYLNGRAVQHREVQGFESATFLGYFKSGLKYKKGGVASGFKHVVPNEVAVQRLFQVKGRRVVRATEVPVSWESFNRGDCFILDLGNDIYQWCGSNSNRYERLKATQVSKGIRDNERSGRAHVHVSEEDAEPAGMLQVLGPKPTLPEGTEDTVKEDAANRKLAKLYKVSNGAGTMTVSLVADENPFAQGALKSEDCFILDHGKDGKIFVWKGKQANTEERKAALKTASDFISKMNYPKQTQVSVLPEGGETPLFKQFFKNWRDPDQVDGPGLSYLSSHIANVERVPFDAATLHTSTAMAAQHGMDDDGTGQKQIWRIEGSNKVPVDPATYGQFYGGDSYIILYNYRHGGRQGQIIYNWQGAQSTQDEVAASAILTAQLDEELGGTPVQSRVVQGKEPAHLMSLFGGKPMIIYRGGTSREGGQTAPASTRLFQVRASSSGATRAVEVIPKAGALNSNDAFVLKTPSAAYLWVGTGASEAEKTGAQELLRVLRAQPVQVAEGSEPDSFWEALGGKAAYRTSPRLKDKKMDAHPPRLFACSNKIGRFVVEEVPGELMQEDLATDDVMLLDTWDQVFVWVGKDSQEEEKTEALTSAKRYIETDPANRDRRTPINVVKQGFEPPSFVGWFLGWDDNYWSVDPLDRAIAELAA.

Positions 1 to 17 are cleaved as a signal peptide; that stretch reads LGALVVALCALSPPARA. A propeptide spanning residues 18–33 is cleaved from the precursor; sequence ATASRGAPQARAPQGR. Residues 19-38 are disordered; that stretch reads TASRGAPQARAPQGRVSPMR. The segment at 41–166 is actin-severing; sequence TMVVEHPEFL…YKKGGVASGF (126 aa). One copy of the Gelsolin-like 1 repeat lies at 66–148; that stretch reads FDLVPVPPNL…VQGFESATFL (83 aa). Tyrosine 76 carries the post-translational modification Phosphotyrosine. Residues glycine 82, aspartate 83, glutamate 114, aspartate 126, glycine 131, and alanine 133 each coordinate Ca(2+). Residues 113–116 form an actin-actin interfilament contact point region; sequence DESG. 152 to 159 contacts a 1,2-diacyl-sn-glycero-3-phospho-(1D-myo-inositol-4,5-bisphosphate); it reads KSGLKYKK. Position 162 (valine 162) interacts with Ca(2+). 178–186 provides a ligand contact to a 1,2-diacyl-sn-glycero-3-phospho-(1D-myo-inositol-4,5-bisphosphate); the sequence is RLFQVKGRR. The Gelsolin-like 2 repeat unit spans residues 188–260; that stretch reads VRATEVPVSW…SEEDAEPAGM (73 aa). Ca(2+) contacts are provided by glycine 203 and aspartate 204. Residues cysteine 205 and cysteine 218 are joined by a disulfide bond. Ca(2+)-binding residues include glutamate 226, aspartate 276, glutamate 319, aspartate 320, and glutamate 344. The stretch at 307–379 is one Gelsolin-like 3 repeat; the sequence is DENPFAQGAL…LPEGGETPLF (73 aa). 2 positions are modified to phosphotyrosine: tyrosine 399 and tyrosine 455. Residues 424–772 form an actin-binding, Ca-sensitive region; the sequence is AAQHGMDDDG…LDRAIAELAA (349 aa). Residues 445 to 526 form a Gelsolin-like 4 repeat; it reads SNKVPVDPAT…VQGKEPAHLM (82 aa). Ca(2+) contacts are provided by glycine 461, aspartate 462, glutamate 492, aspartate 504, glycine 509, proline 511, and threonine 541. The Gelsolin-like 5 repeat unit spans residues 567 to 632; sequence RAVEVIPKAG…AEGSEPDSFW (66 aa). The residue at position 574 (lysine 574) is an N6-acetyllysine. Ca(2+)-binding residues include asparagine 581 and aspartate 582. Tyrosine 593 is modified (phosphotyrosine). Glutamate 604 provides a ligand contact to Ca(2+). Tyrosine 641 is subject to Phosphotyrosine. Residues 671 to 746 form a Gelsolin-like 6 repeat; sequence VEEVPGELMQ…VKQGFEPPSF (76 aa). Residues aspartate 686, aspartate 687, and glutamate 709 each contribute to the Ca(2+) site. Threonine 732 carries the phosphothreonine modification.

It belongs to the villin/gelsolin family. As to quaternary structure, binds to actin and to fibronectin. Identified in a complex composed of ACTA1, COBL, GSN and TMSB4X. Interacts with the inactive form of EIF2AK2/PKR. Interacts with FLII. Phosphorylated on tyrosine residues in vitro.

Its subcellular location is the cytoplasm. The protein localises to the cytoskeleton. It localises to the secreted. Its function is as follows. Calcium-regulated, actin-modulating protein that binds to the plus (or barbed) ends of actin monomers or filaments, preventing monomer exchange (end-blocking or capping). It can promote the assembly of monomers into filaments (nucleation) as well as sever filaments already formed. Plays a role in ciliogenesis. This is Gelsolin (GSN) from Sus scrofa (Pig).